The primary structure comprises 248 residues: UPF0246 protein RF_0769 (248 aa).

It belongs to the UPF0246 family.

This is UPF0246 protein RF_0769 from Rickettsia felis (strain ATCC VR-1525 / URRWXCal2) (Rickettsia azadi).